The chain runs to 187 residues: UPF0301 protein KPN78578_33170 (187 aa).

The protein belongs to the UPF0301 (AlgH) family.

The sequence is that of UPF0301 protein KPN78578_33170 from Klebsiella pneumoniae subsp. pneumoniae (strain ATCC 700721 / MGH 78578).